Consider the following 736-residue polypeptide: Putative ATP-dependent RNA helicase CG14443 (736 aa).

4 disordered regions span residues 32–58 (TKSS…SSVL), 73–166 (GIEG…GERP), 183–237 (NSFK…NSWR), and 265–296 (SFTR…NTWK). Low complexity-rich tracts occupy residues 34 to 58 (SSIW…SSVL) and 125 to 160 (SSES…SHGS). Residues 190–199 (TSRENKESRS) are compositionally biased toward basic and acidic residues. Positions 277–296 (LCYQDQSKNPSRPSNYNTWK) are enriched in polar residues. The Q motif signature appears at 330-358 (LSFERSGFNATILQQLEDQGYDGPTPIQA). In terms of domain architecture, Helicase ATP-binding spans 361 to 534 (WSIAKEGKNI…NKFLGQYTAI (174 aa)). 374–381 (SGKGTGKT) lines the ATP pocket. Positions 482–485 (DNID) match the DEAD box motif. One can recognise a Helicase C-terminal domain in the interval 561–719 (KVERLMKELT…LLQLAEEKMF (159 aa)).

This sequence belongs to the DEAD box helicase family.

It carries out the reaction ATP + H2O = ADP + phosphate + H(+). Probable ATP-binding RNA helicase. This is Putative ATP-dependent RNA helicase CG14443 from Drosophila melanogaster (Fruit fly).